Reading from the N-terminus, the 222-residue chain is Flagellin B5 (222 aa).

The propeptide occupies 1–4; it reads MRRG.

It belongs to the archaeal flagellin family.

It localises to the archaeal flagellum. Functionally, flagellin is the subunit protein which polymerizes to form the filaments of archaeal flagella. The polypeptide is Flagellin B5 (flaB5) (Pyrococcus abyssi (strain GE5 / Orsay)).